Here is a 215-residue protein sequence, read N- to C-terminus: 3,4-dihydroxy-2-butanone 4-phosphate synthase (215 aa).

D-ribulose 5-phosphate-binding positions include 38–39, aspartate 43, 151–155, and glutamate 175; these read RE and RRGHT. Glutamate 39 serves as a coordination point for Mg(2+). Residue histidine 154 participates in Mg(2+) binding.

Belongs to the DHBP synthase family. Homodimer. Mg(2+) serves as cofactor. It depends on Mn(2+) as a cofactor.

The catalysed reaction is D-ribulose 5-phosphate = (2S)-2-hydroxy-3-oxobutyl phosphate + formate + H(+). It participates in cofactor biosynthesis; riboflavin biosynthesis; 2-hydroxy-3-oxobutyl phosphate from D-ribulose 5-phosphate: step 1/1. Functionally, catalyzes the conversion of D-ribulose 5-phosphate to formate and 3,4-dihydroxy-2-butanone 4-phosphate. The polypeptide is 3,4-dihydroxy-2-butanone 4-phosphate synthase (Haemophilus influenzae (strain 86-028NP)).